The sequence spans 507 residues: AMP phosphorylase (507 aa).

Residues Gly168, Ser194–Gly199, and Thr203 contribute to the AMP site. Asp256 functions as the Proton donor in the catalytic mechanism. Positions 264 and 288 each coordinate AMP.

Belongs to the thymidine/pyrimidine-nucleoside phosphorylase family. Type 2 subfamily.

The catalysed reaction is AMP + phosphate = alpha-D-ribose 1,5-bisphosphate + adenine. The enzyme catalyses CMP + phosphate = cytosine + alpha-D-ribose 1,5-bisphosphate. It carries out the reaction UMP + phosphate = alpha-D-ribose 1,5-bisphosphate + uracil. Functionally, catalyzes the conversion of AMP and phosphate to adenine and ribose 1,5-bisphosphate (R15P). Exhibits phosphorylase activity toward CMP and UMP in addition to AMP. Functions in an archaeal AMP degradation pathway, together with R15P isomerase and RubisCO. The chain is AMP phosphorylase from Methanosarcina mazei (strain ATCC BAA-159 / DSM 3647 / Goe1 / Go1 / JCM 11833 / OCM 88) (Methanosarcina frisia).